The following is a 399-amino-acid chain: uncharacterized protein (399 aa).

The tract at residues 375–399 (AAGGHRGSHGKSEQAATVRVVDDRR) is disordered.

Belongs to the mycobacterial PPE family.

This is an uncharacterized protein from Mycobacterium tuberculosis (strain ATCC 25618 / H37Rv).